We begin with the raw amino-acid sequence, 203 residues long: Large ribosomal subunit protein uL18 (203 aa).

This sequence belongs to the universal ribosomal protein uL18 family. Part of the 50S ribosomal subunit. Contacts the 5S and 23S rRNAs.

This is one of the proteins that bind and probably mediate the attachment of the 5S RNA into the large ribosomal subunit, where it forms part of the central protuberance. In Pyrococcus furiosus (strain ATCC 43587 / DSM 3638 / JCM 8422 / Vc1), this protein is Large ribosomal subunit protein uL18.